The chain runs to 314 residues: N-myc-interactor (314 aa).

Positions 1–24 (MDADKDNIKQACDERSAEMDDMRG) are disordered. Ser-16 bears the Phosphoserine mark. Positions 31 to 65 (VHEIMSENKELDEEIKKLEAELQSDAREFQIKENV) form a coiled coil. 2 consecutive NID domains span residues 104-193 (GQAL…GEVE) and 202-293 (RSAV…EVEV).

It belongs to the NMI family. In terms of assembly, interacts with MYCN and MYC, as well as with other transcription factors with a Zip, HLH or a HLH-Zip motif. Interacts with all STAT proteins except STAT2. Interacts with IRF7, the interaction is direct and leads to the inhibition of IRF7-mediated type I IFN production. Interacts (via coiled-coil domain) with TRIM21 (via the SPRY domain); the interaction leads to 'Lys-63'-linked ubiquitination of NMI. Interacts with IFI35; the interaction is direct and is facilitated by TRIM21. Interacts with TLR4; the interaction is direct and leads to NF-kappa-B activation. Post-translationally, may be ubiquitinated. In terms of tissue distribution, expressed in macrophages.

The protein resides in the cytoplasm. It localises to the nucleus. Its subcellular location is the secreted. Its function is as follows. Acts as a signaling pathway regulator involved in innate immune system response. In response to interleukin 2/IL2 and interferon IFN-gamma/IFNG, interacts with signal transducer and activator of transcription/STAT which activate the transcription of downstream genes involved in a multitude of signals for development and homeostasis. Enhances the recruitment of CBP/p300 coactivators to STAT1 and STAT5, resulting in increased STAT1- and STAT5-dependent transcription. In response to interferon IFN-alpha, associates in a complex with transcriptional regulator IFI35 to regulate immune response; the complex formation prevents proteasome-mediated degradation of IFI35. In complex with IFI35, negatively regulates nuclear factor NF-kappa-B signaling by inhibiting the nuclear translocation, activation and transcription of NF-kappa-B subunit p65/RELA, resulting in the inhibition of endothelial cell proliferation, migration and re-endothelialization of injured arteries. Negatively regulates virus-triggered type I interferon/IFN production by inducing proteosome-dependent degradation of IRF7, a transcriptional regulator of type I IFN, thereby interfering with cellular antiviral responses. Beside its role as an intracellular signaling pathway regulator, also functions extracellularly as damage-associated molecular patterns (DAMPs) to promote inflammation, when actively released by macrophage to the extracellular space during cell injury or pathogen invasion. Macrophage-secreted NMI activates NF-kappa-B signaling in adjacent macrophages through Toll-like receptor 4/TLR4 binding and activation, thereby inducing NF-kappa-B translocation from the cytoplasm into the nucleus which promotes the release of pro-inflammatory cytokines. This is N-myc-interactor from Mus musculus (Mouse).